The sequence spans 100 residues: Replication restart protein PriB (100 aa).

Residues methionine 1–isoleucine 100 enclose the SSB domain.

It belongs to the PriB family. As to quaternary structure, homodimer. Interacts with PriA and DnaT. Component of the replication restart primosome. Primosome assembly occurs via a 'hand-off' mechanism. PriA binds to replication forks, subsequently PriB then DnaT bind; DnaT then displaces ssDNA to generate the helicase loading substrate.

In terms of biological role, involved in the restart of stalled replication forks, which reloads the replicative helicase on sites other than the origin of replication; the PriA-PriB pathway is the major replication restart pathway. During primosome assembly it facilitates complex formation between PriA and DnaT on DNA; stabilizes PriA on DNA. Stimulates the DNA unwinding activity of PriA helicase. The sequence is that of Replication restart protein PriB from Vibrio cholerae serotype O1 (strain ATCC 39315 / El Tor Inaba N16961).